Here is a 316-residue protein sequence, read N- to C-terminus: Beta-ketoacyl-[acyl-carrier-protein] synthase III (316 aa).

Active-site residues include C112 and H243. An ACP-binding region spans residues Q244 to R248. N273 is a catalytic residue.

This sequence belongs to the thiolase-like superfamily. FabH family. As to quaternary structure, homodimer.

The protein localises to the cytoplasm. The enzyme catalyses malonyl-[ACP] + acetyl-CoA + H(+) = 3-oxobutanoyl-[ACP] + CO2 + CoA. It functions in the pathway lipid metabolism; fatty acid biosynthesis. Catalyzes the condensation reaction of fatty acid synthesis by the addition to an acyl acceptor of two carbons from malonyl-ACP. Catalyzes the first condensation reaction which initiates fatty acid synthesis and may therefore play a role in governing the total rate of fatty acid production. Possesses both acetoacetyl-ACP synthase and acetyl transacylase activities. Its substrate specificity determines the biosynthesis of branched-chain and/or straight-chain of fatty acids. This is Beta-ketoacyl-[acyl-carrier-protein] synthase III from Yersinia pseudotuberculosis serotype O:1b (strain IP 31758).